A 675-amino-acid chain; its full sequence is UvrABC system protein B (675 aa).

Positions 35–422 constitute a Helicase ATP-binding domain; the sequence is EGVSDGLMFQ…ADNVVEQVVR (388 aa). 48 to 55 contacts ATP; sequence GVTGSGKT. The short motif at 101–124 is the Beta-hairpin element; sequence YYDYYQPEAYVPTRDLFIEKDSSI. A Helicase C-terminal domain is found at 439 to 605; it reads QVDDLLGEIH…GVSKAVRELI (167 aa). Residues 633–668 form the UVR domain; sequence AREIRRLEKLMMDHARNLEFEQAAAARDALNALKSR.

Belongs to the UvrB family. Forms a heterotetramer with UvrA during the search for lesions. Interacts with UvrC in an incision complex.

The protein resides in the cytoplasm. Functionally, the UvrABC repair system catalyzes the recognition and processing of DNA lesions. A damage recognition complex composed of 2 UvrA and 2 UvrB subunits scans DNA for abnormalities. Upon binding of the UvrA(2)B(2) complex to a putative damaged site, the DNA wraps around one UvrB monomer. DNA wrap is dependent on ATP binding by UvrB and probably causes local melting of the DNA helix, facilitating insertion of UvrB beta-hairpin between the DNA strands. Then UvrB probes one DNA strand for the presence of a lesion. If a lesion is found the UvrA subunits dissociate and the UvrB-DNA preincision complex is formed. This complex is subsequently bound by UvrC and the second UvrB is released. If no lesion is found, the DNA wraps around the other UvrB subunit that will check the other stand for damage. This Bordetella bronchiseptica (strain ATCC BAA-588 / NCTC 13252 / RB50) (Alcaligenes bronchisepticus) protein is UvrABC system protein B.